The chain runs to 260 residues: CD40 ligand (260 aa).

Over 1 to 22 (MIETYSQPSPRSVATGLPASMK) the chain is Cytoplasmic. Residues 23 to 46 (IFMYLLTVFLITQMIGSVLFAVYL) form a helical; Signal-anchor for type II membrane protein membrane-spanning segment. Topologically, residues 47–260 (HRRLDKVEEE…GFSSFGLLKL (214 aa)) are extracellular. The 140-residue stretch at 121 to 260 (IAAHVVSEAN…GFSSFGLLKL (140 aa)) folds into the THD domain. Cysteine 177 and cysteine 217 are oxidised to a cystine. Residue asparagine 239 is glycosylated (N-linked (GlcNAc...) asparagine).

Belongs to the tumor necrosis factor family. Homotrimer. Interacts with CD28. CD40 ligand, soluble form: Exists as either a monomer or a homotrimer. Forms a ternary complex between CD40 and integrins for CD40-CD40LG signaling. Post-translationally, the soluble form derives from the membrane form by proteolytic processing. As to expression, specifically expressed on activated CD4+ T-lymphocytes.

The protein resides in the cell membrane. The protein localises to the cell surface. It localises to the secreted. In terms of biological role, cytokine that acts as a ligand to CD40/TNFRSF5. Costimulates T-cell proliferation and cytokine production. Its cross-linking on T-cells generates a costimulatory signal which enhances the production of IL4 and IL10 in conjunction with the TCR/CD3 ligation and CD28 costimulation. Induces the activation of NF-kappa-B. Induces the activation of kinases MAPK8 and PAK2 in T-cells. Mediates B-cell proliferation in the absence of co-stimulus as well as IgE production in the presence of IL4. Involved in immunoglobulin class switching. Its function is as follows. Acts as a ligand for integrins, specifically ITGA5:ITGB1 and ITGAV:ITGB3; both integrins and the CD40 receptor are required for activation of CD40-CD40LG signaling, which have cell-type dependent effects, such as B-cell activation, NF-kappa-B signaling and anti-apoptotic signaling. The protein is CD40 ligand (Cd40lg) of Mus musculus (Mouse).